Here is a 105-residue protein sequence, read N- to C-terminus: MAEETNQQAPESGASSSQPTSRPSGPRGGSGGRKFFRRKKVCKFCTEKIDAIPYRDVRLLQQFVAERGKIVPRRLTGVCTTHQRRLTRAIKQARNIALLPFAARY.

Over residues 1-10 (MAEETNQQAP) the composition is skewed to polar residues. A disordered region spans residues 1-34 (MAEETNQQAPESGASSSQPTSRPSGPRGGSGGRK). Residues 12–25 (SGASSSQPTSRPSG) are compositionally biased toward low complexity.

It belongs to the bacterial ribosomal protein bS18 family. Part of the 30S ribosomal subunit. Forms a tight heterodimer with protein bS6.

Functionally, binds as a heterodimer with protein bS6 to the central domain of the 16S rRNA, where it helps stabilize the platform of the 30S subunit. The polypeptide is Small ribosomal subunit protein bS18 (Acidobacterium capsulatum (strain ATCC 51196 / DSM 11244 / BCRC 80197 / JCM 7670 / NBRC 15755 / NCIMB 13165 / 161)).